A 432-amino-acid chain; its full sequence is Enolase (432 aa).

(2R)-2-phosphoglycerate is bound at residue Gln167. Glu209 acts as the Proton donor in catalysis. Mg(2+) is bound by residues Asp246, Glu290, and Asp317. The (2R)-2-phosphoglycerate site is built by Lys342, Arg371, Ser372, and Lys393. Lys342 functions as the Proton acceptor in the catalytic mechanism.

Belongs to the enolase family. Component of the RNA degradosome, a multiprotein complex involved in RNA processing and mRNA degradation. It depends on Mg(2+) as a cofactor.

The protein resides in the cytoplasm. It localises to the secreted. The protein localises to the cell surface. It carries out the reaction (2R)-2-phosphoglycerate = phosphoenolpyruvate + H2O. It participates in carbohydrate degradation; glycolysis; pyruvate from D-glyceraldehyde 3-phosphate: step 4/5. Its function is as follows. Catalyzes the reversible conversion of 2-phosphoglycerate (2-PG) into phosphoenolpyruvate (PEP). It is essential for the degradation of carbohydrates via glycolysis. The sequence is that of Enolase from Shigella sonnei (strain Ss046).